A 51-amino-acid polypeptide reads, in one-letter code: Large ribosomal subunit protein bL33 (51 aa).

Belongs to the bacterial ribosomal protein bL33 family.

The protein is Large ribosomal subunit protein bL33 of Acinetobacter baylyi (strain ATCC 33305 / BD413 / ADP1).